We begin with the raw amino-acid sequence, 1032 residues long: Y' element ATP-dependent helicase YPR204W (1032 aa).

In terms of domain architecture, Helicase ATP-binding spans 1-175 (MADTPSVAVQ…LQRIGLTGLA (175 aa)). 11–18 (APPGYGKT) serves as a coordination point for ATP. The short motif at 121–124 (DEFH) is the DEAH box element. The 150-residue stretch at 232-381 (KLLLALFEIE…EFYGLESKKG (150 aa)) folds into the Helicase C-terminal domain. The span at 455–634 (ANASTNATTN…ATTTESTNAS (180 aa)) shows a compositional bias: low complexity. The tract at residues 455–658 (ANASTNATTN…RFHPVTDINK (204 aa)) is disordered. A compositionally biased stretch (basic and acidic residues) spans 635 to 658 (AKEDANKDGNAEDNRFHPVTDINK).

It belongs to the helicase family. Yeast subtelomeric Y' repeat subfamily.

Its function is as follows. Catalyzes DNA unwinding and is involved in telomerase-independent telomere maintenance. The protein is Y' element ATP-dependent helicase YPR204W of Saccharomyces cerevisiae (strain ATCC 204508 / S288c) (Baker's yeast).